Consider the following 156-residue polypeptide: Mitochondrial intermembrane space cysteine motif-containing protein MIX17 (156 aa).

Residues 1–21 (MARSRGSSRPISRSRPTQTRS) constitute a mitochondrion transit peptide. Residues 1–21 (MARSRGSSRPISRSRPTQTRS) show a composition bias toward low complexity. 2 disordered regions span residues 1 to 50 (MARS…GAQT) and 78 to 110 (AGIT…QTQT). Residues 84–110 (FSGSGSDSAPVEQQQQNMANTSGQTQT) show a composition bias toward polar residues. Residues 115–156 (GRTCEIDARNFTRCLDENNGNFQICDYYLQQLKACQEAARQY) enclose the CHCH domain. A Cx9C motif motif is present at residues 118-128 (CEIDARNFTRC). 2 cysteine pairs are disulfide-bonded: cysteine 118–cysteine 149 and cysteine 128–cysteine 139.

Its subcellular location is the mitochondrion intermembrane space. The chain is Mitochondrial intermembrane space cysteine motif-containing protein MIX17 (MIX17) from Saccharomyces cerevisiae (strain ATCC 204508 / S288c) (Baker's yeast).